The following is a 314-amino-acid chain: MSFASEIKKELTAIETEECCQLAELAALVRMNGAISISRQGYSLDVQTENAAIARRIYTLIKDNYSIAVELLVRKKMKLKKNNVYIVRLKEEVQLLLEELDLIINQYTIVRTISNKYLEKDCCKKSYLRGAFLAGGSMNNPETSSYHLEIFNYYEEHAESLQKLLNSYGLHARLLARKNGFIVYMKEAEKITEFLSIIGAHKALFKFEDVRIVRDMRNSVNRLVNCETANLNKTIGAAFRQIENIKLIERTVGLDQLPDKLQEIAKLRIQYEDVSLKELGELVTSGAISKSGVNHRLKKIDEFAEKIKRGESIT.

Positions 275–309 form a DNA-binding region, H-T-H motif; that stretch reads SLKELGELVTSGAISKSGVNHRLKKIDEFAEKIKR.

The protein belongs to the WhiA family.

Its function is as follows. Involved in cell division and chromosome segregation. The sequence is that of Probable cell division protein WhiA from Oceanobacillus iheyensis (strain DSM 14371 / CIP 107618 / JCM 11309 / KCTC 3954 / HTE831).